The chain runs to 164 residues: Ribosome-binding factor A (164 aa).

This sequence belongs to the RbfA family. In terms of assembly, monomer. Binds 30S ribosomal subunits, but not 50S ribosomal subunits or 70S ribosomes.

It is found in the cytoplasm. One of several proteins that assist in the late maturation steps of the functional core of the 30S ribosomal subunit. Associates with free 30S ribosomal subunits (but not with 30S subunits that are part of 70S ribosomes or polysomes). Required for efficient processing of 16S rRNA. May interact with the 5'-terminal helix region of 16S rRNA. In Mycobacterium leprae (strain Br4923), this protein is Ribosome-binding factor A.